Reading from the N-terminus, the 81-residue chain is ATP synthase subunit c (81 aa).

2 helical membrane passes run 5–25 and 57–77; these read IAAG…IGAG and VGLV…FVFA.

It belongs to the ATPase C chain family. As to quaternary structure, F-type ATPases have 2 components, F(1) - the catalytic core - and F(0) - the membrane proton channel. F(1) has five subunits: alpha(3), beta(3), gamma(1), delta(1), epsilon(1). F(0) has three main subunits: a(1), b(2) and c(10-14). The alpha and beta chains form an alternating ring which encloses part of the gamma chain. F(1) is attached to F(0) by a central stalk formed by the gamma and epsilon chains, while a peripheral stalk is formed by the delta and b chains.

It localises to the cell membrane. Its function is as follows. F(1)F(0) ATP synthase produces ATP from ADP in the presence of a proton or sodium gradient. F-type ATPases consist of two structural domains, F(1) containing the extramembraneous catalytic core and F(0) containing the membrane proton channel, linked together by a central stalk and a peripheral stalk. During catalysis, ATP synthesis in the catalytic domain of F(1) is coupled via a rotary mechanism of the central stalk subunits to proton translocation. In terms of biological role, key component of the F(0) channel; it plays a direct role in translocation across the membrane. A homomeric c-ring of between 10-14 subunits forms the central stalk rotor element with the F(1) delta and epsilon subunits. This is ATP synthase subunit c from Mycobacterium marinum (strain ATCC BAA-535 / M).